A 437-amino-acid chain; its full sequence is Enolase 2 (437 aa).

Residue Q162 participates in (2R)-2-phosphoglycerate binding. E204 (proton donor) is an active-site residue. The Mg(2+) site is built by D251, E297, and D324. (2R)-2-phosphoglycerate-binding residues include K349, R378, S379, and K400. K349 serves as the catalytic Proton acceptor.

This sequence belongs to the enolase family. The cofactor is Mg(2+).

The protein resides in the cytoplasm. The protein localises to the secreted. It localises to the cell surface. It catalyses the reaction (2R)-2-phosphoglycerate = phosphoenolpyruvate + H2O. It functions in the pathway carbohydrate degradation; glycolysis; pyruvate from D-glyceraldehyde 3-phosphate: step 4/5. In terms of biological role, catalyzes the reversible conversion of 2-phosphoglycerate (2-PG) into phosphoenolpyruvate (PEP). It is essential for the degradation of carbohydrates via glycolysis. This chain is Enolase 2, found in Chlorobaculum tepidum (strain ATCC 49652 / DSM 12025 / NBRC 103806 / TLS) (Chlorobium tepidum).